Here is a 259-residue protein sequence, read N- to C-terminus: Phosphonates import ATP-binding protein PhnC (259 aa).

One can recognise an ABC transporter domain in the interval 4–245 (ISIQSVTKRF…ALRTIYQREG (242 aa)). ATP is bound at residue 37-44 (GPSGAGKS).

The protein belongs to the ABC transporter superfamily. Phosphonates importer (TC 3.A.1.9.1) family. The complex is composed of two ATP-binding proteins (PhnC), two transmembrane proteins (PhnE) and a solute-binding protein (PhnD).

It localises to the cell inner membrane. It catalyses the reaction phosphonate(out) + ATP + H2O = phosphonate(in) + ADP + phosphate + H(+). Its function is as follows. Part of the ABC transporter complex PhnCDE involved in phosphonates import. Responsible for energy coupling to the transport system. This is Phosphonates import ATP-binding protein PhnC from Thiobacillus denitrificans (strain ATCC 25259 / T1).